Here is a 217-residue protein sequence, read N- to C-terminus: Pyridoxine/pyridoxamine 5'-phosphate oxidase (217 aa).

Substrate is bound by residues 13-16 (RREY) and lysine 71. FMN is bound by residues 66 to 71 (RIVLLK), 81 to 82 (YT), arginine 87, lysine 88, and glutamine 110. Positions 128, 132, and 136 each coordinate substrate. FMN is bound by residues 145–146 (QS) and tryptophan 190. 196–198 (RLH) is a binding site for substrate. Arginine 200 is a binding site for FMN.

This sequence belongs to the pyridoxamine 5'-phosphate oxidase family. Homodimer. It depends on FMN as a cofactor.

The catalysed reaction is pyridoxamine 5'-phosphate + O2 + H2O = pyridoxal 5'-phosphate + H2O2 + NH4(+). It carries out the reaction pyridoxine 5'-phosphate + O2 = pyridoxal 5'-phosphate + H2O2. It participates in cofactor metabolism; pyridoxal 5'-phosphate salvage; pyridoxal 5'-phosphate from pyridoxamine 5'-phosphate: step 1/1. Its pathway is cofactor metabolism; pyridoxal 5'-phosphate salvage; pyridoxal 5'-phosphate from pyridoxine 5'-phosphate: step 1/1. In terms of biological role, catalyzes the oxidation of either pyridoxine 5'-phosphate (PNP) or pyridoxamine 5'-phosphate (PMP) into pyridoxal 5'-phosphate (PLP). This is Pyridoxine/pyridoxamine 5'-phosphate oxidase from Yersinia pestis bv. Antiqua (strain Antiqua).